The primary structure comprises 597 residues: Elongation factor 4 (597 aa).

Positions 2–184 (DHIRNFSIIA…SLIAKVPPPK (183 aa)) constitute a tr-type G domain. GTP contacts are provided by residues 14–19 (DHGKST) and 131–134 (NKID).

The protein belongs to the TRAFAC class translation factor GTPase superfamily. Classic translation factor GTPase family. LepA subfamily.

It is found in the cell inner membrane. It catalyses the reaction GTP + H2O = GDP + phosphate + H(+). In terms of biological role, required for accurate and efficient protein synthesis under certain stress conditions. May act as a fidelity factor of the translation reaction, by catalyzing a one-codon backward translocation of tRNAs on improperly translocated ribosomes. Back-translocation proceeds from a post-translocation (POST) complex to a pre-translocation (PRE) complex, thus giving elongation factor G a second chance to translocate the tRNAs correctly. Binds to ribosomes in a GTP-dependent manner. The chain is Elongation factor 4 from Burkholderia pseudomallei (strain 1710b).